The chain runs to 138 residues: Small ribosomal subunit protein uS11c (138 aa).

It belongs to the universal ribosomal protein uS11 family. As to quaternary structure, part of the 30S ribosomal subunit.

It localises to the plastid. The protein resides in the chloroplast. This is Small ribosomal subunit protein uS11c from Acorus calamus (Sweet flag).